The sequence spans 120 residues: Ribosome-binding factor A (120 aa).

It belongs to the RbfA family. As to quaternary structure, monomer. Binds 30S ribosomal subunits, but not 50S ribosomal subunits or 70S ribosomes.

Its subcellular location is the cytoplasm. One of several proteins that assist in the late maturation steps of the functional core of the 30S ribosomal subunit. Associates with free 30S ribosomal subunits (but not with 30S subunits that are part of 70S ribosomes or polysomes). Required for efficient processing of 16S rRNA. May interact with the 5'-terminal helix region of 16S rRNA. This Borrelia garinii subsp. bavariensis (strain ATCC BAA-2496 / DSM 23469 / PBi) (Borreliella bavariensis) protein is Ribosome-binding factor A.